Here is a 288-residue protein sequence, read N- to C-terminus: Energy-coupling factor transporter ATP-binding protein EcfA2 (288 aa).

Positions 3-245 (IIVKNLTHIY…NASKLKDIGL (243 aa)) constitute an ABC transporter domain. 40–47 (GHTGSGKS) provides a ligand contact to ATP.

The protein belongs to the ABC transporter superfamily. Energy-coupling factor EcfA family. As to quaternary structure, forms a stable energy-coupling factor (ECF) transporter complex composed of 2 membrane-embedded substrate-binding proteins (S component), 2 ATP-binding proteins (A component) and 2 transmembrane proteins (T component).

It is found in the cell membrane. Functionally, ATP-binding (A) component of a common energy-coupling factor (ECF) ABC-transporter complex. Unlike classic ABC transporters this ECF transporter provides the energy necessary to transport a number of different substrates. This is Energy-coupling factor transporter ATP-binding protein EcfA2 from Clostridioides difficile (strain 630) (Peptoclostridium difficile).